The following is a 391-amino-acid chain: Galactokinase (391 aa).

34-37 (EHTD) contributes to the substrate binding site. 121 to 127 (GAGLSSS) is an ATP binding site. Positions 127 and 159 each coordinate Mg(2+). The Proton acceptor role is filled by D171. Y220 serves as a coordination point for substrate.

This sequence belongs to the GHMP kinase family. GalK subfamily.

Its subcellular location is the cytoplasm. It catalyses the reaction alpha-D-galactose + ATP = alpha-D-galactose 1-phosphate + ADP + H(+). It participates in carbohydrate metabolism; galactose metabolism. In terms of biological role, catalyzes the transfer of the gamma-phosphate of ATP to D-galactose to form alpha-D-galactose-1-phosphate (Gal-1-P). This is Galactokinase from Roseiflexus sp. (strain RS-1).